The chain runs to 155 residues: DNA gyrase inhibitor (155 aa).

The protein belongs to the DNA gyrase inhibitor family. Interacts with DNA gyrase.

Its subcellular location is the cytoplasm. Functionally, inhibits the supercoiling activity of DNA gyrase. Acts by inhibiting DNA gyrase at an early step, prior to (or at the step of) binding of DNA by the gyrase. It protects cells against toxins that target DNA gyrase, by inhibiting activity of these toxins and reducing the formation of lethal double-strand breaks in the cell. The protein is DNA gyrase inhibitor of Salmonella arizonae (strain ATCC BAA-731 / CDC346-86 / RSK2980).